Consider the following 645-residue polypeptide: Nucleolar GTP-binding protein 1 (645 aa).

The OBG-type G domain maps to 168-340; it reads RTLLICGYPN…VRNKACEKLL (173 aa). Residues 174–181, 220–224, and 288–291 contribute to the GTP site; these read GYPNVGKS, DTPGI, and NKTD. Positions 567-645 are disordered; that stretch reads GQNDSMASGS…KRGIGKSDFR (79 aa). The span at 612–624 shows a compositional bias: basic and acidic residues; sequence NRDARQGEADRHA.

It belongs to the TRAFAC class OBG-HflX-like GTPase superfamily. OBG GTPase family. NOG subfamily.

The protein localises to the nucleus. It is found in the nucleolus. Its function is as follows. Involved in the biogenesis of the 60S ribosomal subunit. The chain is Nucleolar GTP-binding protein 1 (NOG1) from Candida glabrata (strain ATCC 2001 / BCRC 20586 / JCM 3761 / NBRC 0622 / NRRL Y-65 / CBS 138) (Yeast).